We begin with the raw amino-acid sequence, 177 residues long: Large ribosomal subunit protein uL6 (177 aa).

It belongs to the universal ribosomal protein uL6 family. Part of the 50S ribosomal subunit.

This protein binds to the 23S rRNA, and is important in its secondary structure. It is located near the subunit interface in the base of the L7/L12 stalk, and near the tRNA binding site of the peptidyltransferase center. This is Large ribosomal subunit protein uL6 from Rhodopseudomonas palustris (strain BisB5).